Reading from the N-terminus, the 88-residue chain is Cell division topological specificity factor (88 aa).

This sequence belongs to the MinE family.

Functionally, prevents the cell division inhibition by proteins MinC and MinD at internal division sites while permitting inhibition at polar sites. This ensures cell division at the proper site by restricting the formation of a division septum at the midpoint of the long axis of the cell. This chain is Cell division topological specificity factor, found in Paracidovorax citrulli (strain AAC00-1) (Acidovorax citrulli).